We begin with the raw amino-acid sequence, 88 residues long: EMBRYO SURROUNDING FACTOR 1-like protein 3 (88 aa).

The first 22 residues, Met1–Cys22, serve as a signal peptide directing secretion. 3 disulfide bridges follow: Cys41/Cys56, Cys54/Cys80, and Cys57/Cys67.

Belongs to the MEG family. As to expression, expressed in stems, leaves and flowers.

The chain is EMBRYO SURROUNDING FACTOR 1-like protein 3 (ESFL3) from Arabidopsis thaliana (Mouse-ear cress).